Reading from the N-terminus, the 331-residue chain is MGSSQGSTLSADVMSLVDTLPVLAKTLIAGGAAGAIAKTAVAPLERIKILLQTRTNDFKTLGVSQSLKKVLQFDGPLGFYKGNGASVIRIIPYAALHYMTYEVYRDWILEKNLPLGSGPIVDLVAGSAAGGTAVLCTYPLDLARTKLAYQVSDTRQSLRGGANGFYRQPTYSGIKEVLAMAYKEGGPRGLYRGIGPTLIGILPYAGLKFYIYEELKRHVPEEHQNSVRMHLPCGALAGLFGQTITYPLDVVRRQMQVENLQPMTSEGNNKRYKNTFDGLNTIVRTQGWKQLFAGLSINYIKIVPSVAIGFTVYESMKSWMRIPPRERSKPA.

6 helical membrane-spanning segments follow: residues 16-36 (LVDT…AGAI), 79-99 (FYKG…LHYM), 123-143 (LVAG…LDLA), 193-213 (GIGP…YIYE), 231-251 (LPCG…LDVV), and 292-312 (FAGL…GFTV). 3 Solcar repeats span residues 21–107 (PVLA…YRDW), 117–218 (SGPI…LKRH), and 225–319 (NSVR…MKSW).

Belongs to the mitochondrial carrier (TC 2.A.29) family. Expressed throughout the plant.

The protein resides in the mitochondrion inner membrane. In terms of biological role, required for the accumulation of coenzyme A in the mitochondrial matrix. The sequence is that of Mitochondrial carrier protein CoAc1 from Arabidopsis thaliana (Mouse-ear cress).